Reading from the N-terminus, the 218-residue chain is Replication protein RepB (218 aa).

A disordered region spans residues 1–26 (MKSESKIDWTVPRPNKNPKTKQPYKR). Basic residues predominate over residues 16 to 26 (KNPKTKQPYKR).

This sequence belongs to the Gram-positive plasmids replication protein type 2 family.

Its function is as follows. Is essential for plasmid replication. Nicks the positive strand at the plus origin of replication. The polypeptide is Replication protein RepB (repB) (Lactiplantibacillus plantarum (Lactobacillus plantarum)).